Here is a 220-residue protein sequence, read N- to C-terminus: UPF0711 protein C18orf21 (220 aa).

The segment at 117–181 (SRSFVSTLKS…VSTCSSKNTS (65 aa)) is disordered. Polar residues predominate over residues 119–136 (SFVSTLKSNPATPTSKLS). Ser126 carries the post-translational modification Phosphoserine. 2 positions are modified to phosphothreonine: Thr130 and Thr139. Low complexity predominate over residues 171 to 180 (SVSTCSSKNT).

It belongs to the UPF0711 family.

This chain is UPF0711 protein C18orf21 (C18orf21), found in Homo sapiens (Human).